We begin with the raw amino-acid sequence, 51 residues long: VVPPQHLCGAHLVDALYLVCGERGFFYTPKGIVEQCCHKPCNIFDLQNYCN.

Intrachain disulfides connect cysteine 8–cysteine 37, cysteine 20–cysteine 50, and cysteine 36–cysteine 41.

This sequence belongs to the insulin family. In terms of assembly, heterodimer of a B chain and an A chain linked by two disulfide bonds.

The protein resides in the secreted. Its function is as follows. Insulin decreases blood glucose concentration. It increases cell permeability to monosaccharides, amino acids and fatty acids. It accelerates glycolysis, the pentose phosphate cycle, and glycogen synthesis in liver. The polypeptide is Insulin (ins) (Platichthys flesus (European flounder)).